The primary structure comprises 304 residues: Coenzyme PQQ synthesis protein B (304 aa).

Belongs to the PqqB family.

The protein operates within cofactor biosynthesis; pyrroloquinoline quinone biosynthesis. Functionally, may be involved in the transport of PQQ or its precursor to the periplasm. The polypeptide is Coenzyme PQQ synthesis protein B (Pseudomonas aeruginosa (strain UCBPP-PA14)).